Here is a 185-residue protein sequence, read N- to C-terminus: Ribosome-recycling factor (185 aa).

It belongs to the RRF family.

It localises to the cytoplasm. In terms of biological role, responsible for the release of ribosomes from messenger RNA at the termination of protein biosynthesis. May increase the efficiency of translation by recycling ribosomes from one round of translation to another. This Coxiella burnetii (strain RSA 493 / Nine Mile phase I) protein is Ribosome-recycling factor.